Reading from the N-terminus, the 602-residue chain is Probable translation initiation factor IF-2 (602 aa).

The tr-type G domain occupies Leu9–Lys229. Residues Gly18 to Thr25 form a G1 region. Gly18–Thr25 is a binding site for GTP. A G2 region spans residues Glu43–Glu47. The interval Asp82–Gly85 is G3. Residues Asp82 to His86 and Asn136 to Asp139 contribute to the GTP site. A G4 region spans residues Asn136–Asp139. Residues Ser204 to Lys206 form a G5 region.

It belongs to the TRAFAC class translation factor GTPase superfamily. Classic translation factor GTPase family. IF-2 subfamily.

In terms of biological role, function in general translation initiation by promoting the binding of the formylmethionine-tRNA to ribosomes. Seems to function along with eIF-2. The sequence is that of Probable translation initiation factor IF-2 (infB) from Sulfolobus acidocaldarius (strain ATCC 33909 / DSM 639 / JCM 8929 / NBRC 15157 / NCIMB 11770).